The sequence spans 397 residues: ORC1-type DNA replication protein 8 (397 aa).

ATP contacts are provided by residues 61–65 (VGKTA), Tyr211, and Arg223.

It belongs to the CDC6/cdc18 family.

Involved in regulation of DNA replication. This is ORC1-type DNA replication protein 8 (orc8) from Halobacterium salinarum (strain ATCC 700922 / JCM 11081 / NRC-1) (Halobacterium halobium).